The following is a 78-amino-acid chain: Acyl carrier protein (78 aa).

The Carrier domain maps to 2–77 (SDILERVRKI…DAVKFITEKT (76 aa)). Ser37 carries the O-(pantetheine 4'-phosphoryl)serine modification.

The protein belongs to the acyl carrier protein (ACP) family. Post-translationally, 4'-phosphopantetheine is transferred from CoA to a specific serine of apo-ACP by AcpS. This modification is essential for activity because fatty acids are bound in thioester linkage to the sulfhydryl of the prosthetic group.

The protein resides in the cytoplasm. It functions in the pathway lipid metabolism; fatty acid biosynthesis. Functionally, carrier of the growing fatty acid chain in fatty acid biosynthesis. The polypeptide is Acyl carrier protein (Caulobacter vibrioides (strain ATCC 19089 / CIP 103742 / CB 15) (Caulobacter crescentus)).